We begin with the raw amino-acid sequence, 195 residues long: U8 snoRNA-decapping enzyme (195 aa).

A Nudix hydrolase domain is found at 18–168 (GWRHACHAML…LENTFIGNAR (151 aa)). Residues His24, Arg50, and Phe57 each coordinate substrate. Mn(2+) is bound by residues Gly59, Glu76, Glu80, and His99. Residues 61–82 (FVDLRDGSLEDGLNRELGEELG) carry the Nudix box motif. Substrate is bound by residues Asn166 and Gln170. Glu173 contributes to the Mn(2+) binding site.

The protein belongs to the Nudix hydrolase family. NUDT16 subfamily. As to quaternary structure, homodimer. Mg(2+) serves as cofactor. Mn(2+) is required as a cofactor. Requires Co(2+) as cofactor.

Its subcellular location is the nucleus. It localises to the nucleolus. The protein resides in the nucleoplasm. It is found in the cytoplasm. The enzyme catalyses a 5'-end (N(7)-methyl 5'-triphosphoguanosine)-ribonucleoside in mRNA + H2O = N(7)-methyl-GDP + a 5'-end phospho-ribonucleoside in mRNA + 2 H(+). It catalyses the reaction IDP + H2O = IMP + phosphate + H(+). It carries out the reaction dIDP + H2O = dIMP + phosphate + H(+). The catalysed reaction is a 5'-end NAD(+)-phospho-ribonucleoside in mRNA + H2O = a 5'-end phospho-ribonucleoside in mRNA + NAD(+) + H(+). The enzyme catalyses a 5'-end FAD-phospho-ribonucleoside in mRNA + H2O = a 5'-end phospho-adenosine-phospho-ribonucleoside in mRNA + FMN + 2 H(+). It catalyses the reaction a 5'-end CoA-ribonucleoside in mRNA + H2O = a 5'-end phospho-adenosine-phospho-ribonucleoside in mRNA + (R)-4'-phosphopantetheine + 2 H(+). Its function is as follows. RNA-binding and decapping enzyme that catalyzes the cleavage of the cap structure of snoRNAs and mRNAs in a metal-dependent manner. Part of the U8 snoRNP complex that is required for the accumulation of mature 5.8S and 28S rRNA. Has diphosphatase activity and removes m7G and/or m227G caps from U8 snoRNA and leaves a 5'monophosphate on the RNA. Also catalyzes the cleavage of the cap structure on mRNAs. Does not hydrolyze cap analog structures like 7-methylguanosine nucleoside triphosphate (m7GpppG). Also hydrolysis m7G- and m227G U3-capped RNAs but with less efficiencies. Has broad substrate specificity with manganese or cobalt as cofactor and can act on various RNA species. Binds to the U8 snoRNA; metal is not required for RNA-binding. May play a role in the regulation of snoRNAs and mRNAs degradation. Also acts as a phosphatase; hydrolyzes the non-canonical purine nucleotides inosine diphosphate (IDP) and deoxyinosine diphosphate (dITP) as well as guanosine diphosphate (GDP), deoxyguanosine diphosphate (dGDP), xanthine diphosphate (XDP), inosine triphosphate (ITP) and deoxyinosine triphosphate (ITP) to their respective monophosphate derivatives and does not distinguish between the deoxy- and ribose forms. The order of activity with different substrates is IDP &gt; dIDP &gt;&gt; GDP = dGDP &gt; XDP = ITP = dITP. Binds strongly to GTP, ITP and XTP. Participates in the hydrolysis of dIDP/IDP and probably excludes non-canonical purines from RNA and DNA precursor pools, thus preventing their incorporation into RNA and DNA and avoiding chromosomal lesions. Exhibits decapping activity towards NAD-capped RNAs and FAD-capped RNAs. Exhibits decapping activity towards dpCoA-capped RNAs in vitro. In Ovis aries (Sheep), this protein is U8 snoRNA-decapping enzyme (NUDT16).